A 299-amino-acid polypeptide reads, in one-letter code: Protease HtpX homolog (299 aa).

2 consecutive transmembrane segments (helical) span residues 14–34 and 39–59; these read WLLL…VGYL and GFGG…TMIF. His-143 serves as a coordination point for Zn(2+). Residue Glu-144 is part of the active site. A Zn(2+)-binding site is contributed by His-147. Transmembrane regions (helical) follow at residues 153–173 and 198–218; these read IRIS…AVMA and IILL…ATLV. Glu-227 contacts Zn(2+).

It belongs to the peptidase M48B family. Requires Zn(2+) as cofactor.

Its subcellular location is the cell membrane. The chain is Protease HtpX homolog from Streptococcus thermophilus (strain ATCC BAA-491 / LMD-9).